Reading from the N-terminus, the 722-residue chain is Serine/threonine-protein kinase dkf-1 (722 aa).

Phorbol-ester/DAG-type zinc fingers lie at residues 98-148 and 186-236; these read PHVV…RNNC and PHTL…ASNC. Residues 279-407 form the PH domain; sequence KKLEGWMMHF…QFIKESLQPP (129 aa). The 260-residue stretch at 426–685 folds into the Protein kinase domain; that stretch reads VLSDKTLGSG…IEQCLDHGWL (260 aa). Residues 432–440 and Lys455 each bind ATP; that span reads LGSGQFGTV. Asp551 acts as the Proton acceptor in catalysis. Thr588 carries the post-translational modification Phosphothreonine.

The protein belongs to the protein kinase superfamily. CAMK Ser/Thr protein kinase family. PKD subfamily. The cofactor is Mg(2+). Prolonged phosphorylation at Thr-588 results in ubiquitination and degradation. Highly expressed in embryos and at lower levels through the four larval stages in adults. Present in a region bounded by the anterior and posterior bulbs of the pharynx and an area of the tail containing the lumbar, dorsorectal and pre-anal ganglia. Expressed in neurons.

It is found in the cytoplasm. The protein resides in the membrane. The catalysed reaction is L-seryl-[protein] + ATP = O-phospho-L-seryl-[protein] + ADP + H(+). The enzyme catalyses L-threonyl-[protein] + ATP = O-phospho-L-threonyl-[protein] + ADP + H(+). With respect to regulation, activated by DAG and phorbol esters. Phorbol-ester/DAG-type domain 1 binds phorbol ester with high affinity and mediates accumulation at the cell periphery. Phorbol-ester/DAG-type domain 2 binds phorbol ester with low affinity but may mediate initial contact, resulting in a conformational change allowing previously occluded domain 1 to anchor the kinase. Phosphorylation on Thr-588 is then also required for activation and may also result in a further conformational change. Its function is as follows. Converts transient diacylglycerol (DAG) signals into prolonged physiological effects, independently of PKC. Role in the regulation of growth and neuromuscular control of movement. Involved in immune response to S.aureus bacterium by activating transcription factor hlh-30 downstream of phospholipase plc-1. The chain is Serine/threonine-protein kinase dkf-1 (dkf-1) from Caenorhabditis elegans.